Consider the following 124-residue polypeptide: Small ribosomal subunit protein uS12 (124 aa).

Residue aspartate 89 is modified to 3-methylthioaspartic acid. A disordered region spans residues 104–124 (TAGVENRKQSRSKYGAKRPKK). The segment covering 112–124 (QSRSKYGAKRPKK) has biased composition (basic residues).

The protein belongs to the universal ribosomal protein uS12 family. As to quaternary structure, part of the 30S ribosomal subunit. Contacts proteins S8 and S17. May interact with IF1 in the 30S initiation complex.

With S4 and S5 plays an important role in translational accuracy. In terms of biological role, interacts with and stabilizes bases of the 16S rRNA that are involved in tRNA selection in the A site and with the mRNA backbone. Located at the interface of the 30S and 50S subunits, it traverses the body of the 30S subunit contacting proteins on the other side and probably holding the rRNA structure together. The combined cluster of proteins S8, S12 and S17 appears to hold together the shoulder and platform of the 30S subunit. This chain is Small ribosomal subunit protein uS12, found in Pseudothermotoga lettingae (strain ATCC BAA-301 / DSM 14385 / NBRC 107922 / TMO) (Thermotoga lettingae).